A 115-amino-acid polypeptide reads, in one-letter code: NADH-ubiquinone oxidoreductase chain 3 (115 aa).

3 helical membrane-spanning segments follow: residues 3–23, 55–75, and 84–104; these read LMLALLTNFTLATLLVIIAFW, FFLVAITFLLFDLEIALLLPL, and LNTMLTMALFLIILLAVSLAY.

It belongs to the complex I subunit 3 family. Core subunit of respiratory chain NADH dehydrogenase (Complex I) which is composed of 45 different subunits. Interacts with TMEM186. Interacts with TMEM242.

The protein localises to the mitochondrion inner membrane. The catalysed reaction is a ubiquinone + NADH + 5 H(+)(in) = a ubiquinol + NAD(+) + 4 H(+)(out). Its function is as follows. Core subunit of the mitochondrial membrane respiratory chain NADH dehydrogenase (Complex I) which catalyzes electron transfer from NADH through the respiratory chain, using ubiquinone as an electron acceptor. Essential for the catalytic activity of complex I. The protein is NADH-ubiquinone oxidoreductase chain 3 of Bos indicus (Zebu).